Here is a 120-residue protein sequence, read N- to C-terminus: Dihydroneopterin aldolase (120 aa).

Substrate contacts are provided by residues E21, Y53, and V72–E73. K99 serves as the catalytic Proton donor/acceptor.

Belongs to the DHNA family.

The enzyme catalyses 7,8-dihydroneopterin = 6-hydroxymethyl-7,8-dihydropterin + glycolaldehyde. Its pathway is cofactor biosynthesis; tetrahydrofolate biosynthesis; 2-amino-4-hydroxy-6-hydroxymethyl-7,8-dihydropteridine diphosphate from 7,8-dihydroneopterin triphosphate: step 3/4. Catalyzes the conversion of 7,8-dihydroneopterin to 6-hydroxymethyl-7,8-dihydropterin. The protein is Dihydroneopterin aldolase (folB) of Bacillus subtilis (strain 168).